Consider the following 126-residue polypeptide: Small ribosomal subunit protein uS13 (126 aa).

The tract at residues 95 to 126 is disordered; the sequence is GMPVRGQRTRTNARTRRGRRGQAIGIKKKVKK.

Belongs to the universal ribosomal protein uS13 family. In terms of assembly, part of the 30S ribosomal subunit. Forms a loose heterodimer with protein S19. Forms two bridges to the 50S subunit in the 70S ribosome.

In terms of biological role, located at the top of the head of the 30S subunit, it contacts several helices of the 16S rRNA. In the 70S ribosome it contacts the 23S rRNA (bridge B1a) and protein L5 of the 50S subunit (bridge B1b), connecting the 2 subunits; these bridges are implicated in subunit movement. Contacts the tRNAs in the A and P-sites. In Chloroflexus aggregans (strain MD-66 / DSM 9485), this protein is Small ribosomal subunit protein uS13.